The sequence spans 195 residues: Imidazoleglycerol-phosphate dehydratase (195 aa).

It belongs to the imidazoleglycerol-phosphate dehydratase family.

The protein resides in the cytoplasm. It catalyses the reaction D-erythro-1-(imidazol-4-yl)glycerol 3-phosphate = 3-(imidazol-4-yl)-2-oxopropyl phosphate + H2O. It participates in amino-acid biosynthesis; L-histidine biosynthesis; L-histidine from 5-phospho-alpha-D-ribose 1-diphosphate: step 6/9. This is Imidazoleglycerol-phosphate dehydratase from Geobacillus thermodenitrificans (strain NG80-2).